The primary structure comprises 235 residues: Small ribosomal subunit protein uS3 (235 aa).

One can recognise a KH type-2 domain in the interval V39–K107.

It belongs to the universal ribosomal protein uS3 family. As to quaternary structure, part of the 30S ribosomal subunit. Forms a tight complex with proteins S10 and S14.

In terms of biological role, binds the lower part of the 30S subunit head. Binds mRNA in the 70S ribosome, positioning it for translation. In Actinobacillus succinogenes (strain ATCC 55618 / DSM 22257 / CCUG 43843 / 130Z), this protein is Small ribosomal subunit protein uS3.